A 1807-amino-acid chain; its full sequence is Phospholipase D (1807 aa).

A disordered region spans residues 1-28; that stretch reads MPGPDDDVREPTAAARTNNSGYGLRAAP. A run of 3 helical transmembrane segments spans residues 257–277, 305–325, and 587–607; these read IAFV…IVTS, AGVF…VFVY, and VYYI…GFLA. A disordered region spans residues 697–734; it reads TASRMGTGNLAPASSRVDSSTQSEDSFEAPKPPPSSVS. PLD phosphodiesterase domains follow at residues 853 to 880 and 1249 to 1276; these read GFWS…CFGR and EQIY…NDRS. Catalysis depends on residues His-858, Lys-860, Asp-865, His-1254, Lys-1256, and Asp-1261. Composition is skewed to polar residues over residues 1531–1547, 1568–1578, and 1597–1614; these read FSRS…SQLD, YNSNSMPSNAS, and YPNS…QSPA. A disordered region spans residues 1531–1621; it reads FSRSNSVSTP…SPAIATGARS (91 aa).

The protein belongs to the phospholipase D family. TM-PLD subfamily.

The protein resides in the membrane. It carries out the reaction a 1,2-diacyl-sn-glycero-3-phosphocholine + H2O = a 1,2-diacyl-sn-glycero-3-phosphate + choline + H(+). Functionally, hydrolyzes glycerol-phospholipids at the terminal phosphodiesteric bond. The sequence is that of Phospholipase D from Phytophthora infestans (Potato late blight agent).